A 192-amino-acid polypeptide reads, in one-letter code: Phosphoheptose isomerase (192 aa).

One can recognise an SIS domain in the interval 37–192 (LADSFKAGGK…IQLIEKEMEK (156 aa)). 52–54 (NGG) serves as a coordination point for substrate. The Zn(2+) site is built by His-61 and Glu-65. Substrate is bound by residues Glu-65, 93–94 (ND), 119–121 (STS), Ser-124, and Gln-172. Zn(2+) contacts are provided by Gln-172 and His-180.

The protein belongs to the SIS family. GmhA subfamily. In terms of assembly, homotetramer. Zn(2+) is required as a cofactor.

The protein resides in the cytoplasm. It carries out the reaction 2 D-sedoheptulose 7-phosphate = D-glycero-alpha-D-manno-heptose 7-phosphate + D-glycero-beta-D-manno-heptose 7-phosphate. It participates in carbohydrate biosynthesis; D-glycero-D-manno-heptose 7-phosphate biosynthesis; D-glycero-alpha-D-manno-heptose 7-phosphate and D-glycero-beta-D-manno-heptose 7-phosphate from sedoheptulose 7-phosphate: step 1/1. Its function is as follows. Catalyzes the isomerization of sedoheptulose 7-phosphate in D-glycero-D-manno-heptose 7-phosphate. This Proteus mirabilis (strain HI4320) protein is Phosphoheptose isomerase.